Consider the following 469-residue polypeptide: IAA-alanine resistance protein 1 (469 aa).

The first 28 residues, methionine 1–serine 28, serve as a signal peptide directing secretion. The interval alanine 33–aspartate 58 is disordered. Basic and acidic residues predominate over residues histidine 47–aspartate 58. A run of 2 helical transmembrane segments spans residues cysteine 114–valine 134 and tryptophan 141–histidine 161. The interval glycine 170–serine 197 is disordered. Residues histidine 173–serine 193 show a composition bias toward basic and acidic residues. The helical transmembrane segment at leucine 201 to valine 221 threads the bilayer. A disordered region spans residues serine 228–glutamate 315. The segment covering glycine 235–lysine 246 has biased composition (basic residues). Over residues lysine 247–asparagine 256 the composition is skewed to basic and acidic residues. Positions leucine 257–aspartate 279 are enriched in polar residues. Positions alanine 292 to glutamate 315 are enriched in basic and acidic residues. The next 3 helical transmembrane spans lie at leucine 387–tryptophan 407, serine 415–alanine 435, and serine 448–isoleucine 468.

The protein belongs to the ZIP transporter (TC 2.A.5) family. KE4/Catsup subfamily.

The protein resides in the membrane. Functionally, may participate in auxin metabolism or response. Probable transporter. The protein is IAA-alanine resistance protein 1 (IAR1) of Arabidopsis thaliana (Mouse-ear cress).